Consider the following 470-residue polypeptide: MRAVRCSLIRGVAGLRMASSALDEMKEQMLRRWKEDQKKIDDLRKKHGHEKLCDATIDAVYGGMRGITGLVYEPSLLDPAEGIRFRGLTILECQEMLPKAPGGKEPLPEAMFWLLMTGEVPTEEQVRGLNAELHRRADPEAIAAAQKAIAALPRNAHPMTAFSVGVLALQSYSKFAAAYAAGKSNKKTYWEYALEDSLDMLARTPTVAAMIYNRETKGQVELAAPSNSDLDWAANFAKMMGYQDEEFWECMRLYLSVHADHEGGNVSAHTTTLVASALSDPYLAFSAGLNGLAGPLHGLANQEVLNYLLSMQERVKADGVNMHDEAALEKALSNYTWELLNSGQVVPGYGHAVLRKVDPRYTCQRNFCLRHKFDDDLFKLVNTIYSIMPGILKEHGKTKNPYPNVDAHSGVLLQHYGLTEQNYYTVLFGLSRQMGVLAGVVWDRLQGRPLERPKSITTEMLAKKYLCNSL.

Residues H297, H351, and D406 contribute to the active site.

Belongs to the citrate synthase family. In terms of assembly, homodimer.

Its subcellular location is the mitochondrion matrix. The enzyme catalyses oxaloacetate + acetyl-CoA + H2O = citrate + CoA + H(+). It participates in carbohydrate metabolism; tricarboxylic acid cycle; isocitrate from oxaloacetate: step 1/2. The protein is Probable citrate synthase, mitochondrial of Leishmania major.